The primary structure comprises 999 residues: Probable hemoglobin and hemoglobin-haptoglobin-binding protein 4 (999 aa).

A signal peptide spans 1–24 (MTNFRLNVLAYSVMLGLTASVAYA). The tract at residues 25–52 (EPTNQPTNQPTNQPTNQPTNQPTNQNSN) is disordered. 6 tandem repeats follow at residues 26–29 (PTNQ), 30–33 (PTNQ), 34–37 (PTNQ), 38–41 (PTNQ), 42–45 (PTNQ), and 46–49 (PTNQ). Residues 26 to 49 (PTNQPTNQPTNQPTNQPTNQPTNQ) form a 6 X 4 AA tandem repeats of P-T-N-Q region. Residues 26–50 (PTNQPTNQPTNQPTNQPTNQPTNQN) are compositionally biased toward low complexity. The TonB box motif lies at 58-65 (EQINVLGS). The TBDR plug domain occupies 68 to 195 (NNDNTPPKIA…LGGAVLFETK (128 aa)). Positions 203-999 (EKDWHIGYKA…NYKLSAEITF (797 aa)) constitute a TBDR beta-barrel domain. The TonB C-terminal box motif lies at 982–999 (NRFYSPGRNYKLSAEITF).

This sequence belongs to the TonB-dependent receptor family. Hemoglobin/haptoglobin binding protein subfamily.

The protein resides in the cell outer membrane. Its function is as follows. Acts as a receptor for hemoglobin or the hemoglobin/haptoglobin complex of the human host and is required for heme uptake. This Haemophilus influenzae (strain ATCC 51907 / DSM 11121 / KW20 / Rd) protein is Probable hemoglobin and hemoglobin-haptoglobin-binding protein 4.